Reading from the N-terminus, the 912-residue chain is Protein SLFN14 (912 aa).

A required for endoribonuclease activity region spans residues 206–391; that stretch reads ESTHVEFKRF…KVHKFKEALQ (186 aa). A required for ribosome binding region spans residues 392-571; it reads RHLFPVTQEE…QMGCEFFNLL (180 aa). 593–600 provides a ligand contact to ATP; it reads CFPGVRKT.

This sequence belongs to the Schlafen family. Subgroup III subfamily. As to quaternary structure, associates with ribosomes in an ATP-independent manner. Requires Mg(2+) as cofactor. It depends on Mn(2+) as a cofactor. Expressed in megakaryocytes and platelets (at protein level). Weakly expressed in melanocytes and malignant melanoma cells.

The protein resides in the nucleus. In terms of biological role, shows no ribosome-associated and endoribonuclease activities. Functionally, displays polysome-associated endoribonuclease activity towards mRNAs and rRNAs. May play a role in RNA surveillance pathways by recognizing stalled ribosomes and triggering endonucleolytic cleavage of aberrant mRNAs. Cleaves different types of rRNAs and mRNAs in a magnesium- and manganese-dependent and ATP-independent manner. Involved in correct maturation of megakaryocytes and especially important for proplatelet extension. This chain is Protein SLFN14, found in Homo sapiens (Human).